A 309-amino-acid polypeptide reads, in one-letter code: Coenzyme PQQ synthesis protein B (309 aa).

This sequence belongs to the PqqB family.

The protein operates within cofactor biosynthesis; pyrroloquinoline quinone biosynthesis. Functionally, may be involved in the transport of PQQ or its precursor to the periplasm. This Nitrosococcus oceani (strain ATCC 19707 / BCRC 17464 / JCM 30415 / NCIMB 11848 / C-107) protein is Coenzyme PQQ synthesis protein B.